The primary structure comprises 473 residues: Trehalose-6-phosphate synthase (473 aa).

Residue R10 participates in D-glucose 6-phosphate binding. Position 21 to 22 (21 to 22) interacts with UDP-alpha-D-glucose; that stretch reads GG. 2 residues coordinate D-glucose 6-phosphate: Y76 and D130. Residues R262 and K267 each contribute to the UDP-alpha-D-glucose site. Residue R300 coordinates D-glucose 6-phosphate. Residues F339 and 365-369 contribute to the UDP-alpha-D-glucose site; that span reads LVAKE.

Belongs to the glycosyltransferase 20 family. As to quaternary structure, homotetramer.

It catalyses the reaction D-glucose 6-phosphate + UDP-alpha-D-glucose = alpha,alpha-trehalose 6-phosphate + UDP + H(+). The protein operates within glycan biosynthesis; trehalose biosynthesis. Its function is as follows. Probably involved in the osmoprotection via the biosynthesis of trehalose. Catalyzes the transfer of glucose from UDP-alpha-D-glucose (UDP-Glc) to D-glucose 6-phosphate (Glc-6-P) to form trehalose-6-phosphate. Acts with retention of the anomeric configuration of the UDP-sugar donor. This is Trehalose-6-phosphate synthase (otsA) from Salmonella arizonae (strain ATCC BAA-731 / CDC346-86 / RSK2980).